We begin with the raw amino-acid sequence, 358 residues long: Serine/threonine-protein phosphatase 2A activator 2 (358 aa).

It belongs to the PTPA-type PPIase family.

The protein localises to the cytoplasm. The enzyme catalyses [protein]-peptidylproline (omega=180) = [protein]-peptidylproline (omega=0). In terms of biological role, PPIases accelerate the folding of proteins. It catalyzes the cis-trans isomerization of proline imidic peptide bonds in oligopeptides. Acts as a regulatory subunit for PP2A-like phosphatases modulating their activity or substrate specificity, probably by inducing a conformational change in the catalytic subunit, a direct target of the PPIase. Can reactivate inactive phosphatase PP2A-phosphatase methylesterase complexes (PP2Ai) in presence of ATP and Mg(2+) by dissociating the inactive form from the complex. The sequence is that of Serine/threonine-protein phosphatase 2A activator 2 (RRD2) from Candida glabrata (strain ATCC 2001 / BCRC 20586 / JCM 3761 / NBRC 0622 / NRRL Y-65 / CBS 138) (Yeast).